We begin with the raw amino-acid sequence, 616 residues long: Protein RIK (616 aa).

Residues 1-11 are compositionally biased toward basic and acidic residues; it reads MTEDRAHKVAD. The disordered stretch occupies residues 1 to 32; that stretch reads MTEDRAHKVADEPAASGRQSPERKKRKWDQPA. The KH domain maps to 198 to 304; sequence GTTSESISVP…AKVLAENLLD (107 aa). Composition is skewed to polar residues over residues 432–449, 475–484, and 491–502; these read TQAV…TKGN, TESQNSQQGS, and LDSSGNIGSSSI. Disordered stretches follow at residues 432-455 and 467-616; these read TQAV…LDAE and LPVS…HTCV. A compositionally biased stretch (pro residues) spans 534–564; the sequence is LPPPLKSMLPLPPRSMPPPPPKSMPPPPPKF. Basic and acidic residues-rich tracts occupy residues 565-575 and 598-610; these read PSDEFLSRNEN and SERR…EEKN.

As to quaternary structure, interacts with RS2. As to expression, expressed in vegetative tissues. More abundant in apices and young leaf primordia than in fully expanded leaf tissues.

The protein resides in the nucleus. In Zea mays (Maize), this protein is Protein RIK.